Here is a 555-residue protein sequence, read N- to C-terminus: E3 ubiquitin-protein ligase ARIH1 (555 aa).

Over residues 1–47 (MDSDEGYNYEFDEDEECSEEDSGAEEEEDEDDDEPDDDNLDLGEVEL) the composition is skewed to acidic residues. The tract at residues 1 to 93 (MDSDEGYNYE…GGGGGPGHEQ (93 aa)) is disordered. The span at 65–90 (ETGGGGGSALGPGGGGGGGGGGGGPG) shows a compositional bias: gly residues. The segment at 103–151 (TAEQILQHMVECIREVNEVIQNPATITRILLSHFNWDKEKLMERYFDGN) is UBA-like. Lys140 carries the post-translational modification N6-acetyllysine. The interval 180 to 391 (QDMPCQICYL…SAWYNCNRYN (212 aa)) is TRIAD supradomain. Cys184, Cys187, Cys201, His203, Cys206, Cys209, Cys229, Cys234, Cys274, Cys279, Cys295, Cys297, Cys302, Cys305, His310, Cys315, Cys342, and Cys345 together coordinate Zn(2+). The RING-type 1 zinc finger occupies 184-234 (CQICYLNYPNSYFTGLECGHKFCMQCWSEYLTTKIMEEGMGQTISCPAHGC). The segment at 254-315 (LKYQHLITNS…GENWHDPVKC (62 aa)) adopts an IBR-type zinc-finger fold. The RING-type 2; atypical zinc finger occupies 342-373 (CPKCHVTIEKDGGCNHMVCRNQNCKAEFCWVC). Cys355 is a catalytic residue. Positions 360, 365, 370, 373, 380, and 387 each coordinate Zn(2+). The interval 406 to 555 (RAALQRYLFY…EKDLWEYIED (150 aa)) is ariadne domain.

This sequence belongs to the RBR family. Ariadne subfamily. As to quaternary structure, interacts (via the first RING-type zinc finger) with UBE2L3. Associates with cullin-RING ubiquitin ligase (CRL) complexes containing CUL1, CUL2 and CUL3. Interacts with neddylated CUL1. Interacts with neddylated CUL2. Interacts with neddylated CUL3. Interacts with neddylated CUL4A.

Its subcellular location is the cytoplasm. The protein localises to the nucleus. The protein resides in the cajal body. The catalysed reaction is [E2 ubiquitin-conjugating enzyme]-S-ubiquitinyl-L-cysteine + [acceptor protein]-L-lysine = [E2 ubiquitin-conjugating enzyme]-L-cysteine + [acceptor protein]-N(6)-ubiquitinyl-L-lysine.. The protein operates within protein modification; protein ubiquitination. Autoinhibited by the ariadne domain, which masks the second RING-type zinc finger that contains the active site and inhibits the E3 activity. Inhibition is relieved upon binding to neddylated cullin-RING ubiquitin ligase complexes, which activate the E3 ligase activity of ARIH1. E3 ubiquitin-protein ligase, which catalyzes ubiquitination of target proteins together with ubiquitin-conjugating enzyme E2 UBE2L3. Acts as an atypical E3 ubiquitin-protein ligase by working together with cullin-RING ubiquitin ligase (CRL) complexes and initiating ubiquitination of CRL substrates: associates with CRL complexes and specifically mediates addition of the first ubiquitin on CRLs targets. The initial ubiquitin is then elongated by CDC34/UBE2R1 and UBE2R2. E3 ubiquitin-protein ligase activity is activated upon binding to neddylated cullin-RING ubiquitin ligase complexes. Plays a role in protein translation in response to DNA damage by mediating ubiquitination of EIF4E2, the consequences of EIF4E2 ubiquitination are however unclear. According to a report, EIF4E2 ubiquitination leads to promote EIF4E2 cap-binding and protein translation arrest. According to another report EIF4E2 ubiquitination leads to its subsequent degradation. Acts as the ligase involved in ISGylation of EIF4E2. In vitro, controls the degradation of the LINC (LInker of Nucleoskeleton and Cytoskeleton) complex member SUN2 and may therefore have a role in the formation and localization of the LINC complex, and as a consequence, may act in nuclear subcellular localization and nuclear morphology. The sequence is that of E3 ubiquitin-protein ligase ARIH1 (ARIH1) from Bos taurus (Bovine).